The chain runs to 824 residues: Leucine--tRNA ligase (824 aa).

A 'HIGH' region motif is present at residues 42–52 (PYPSGKIHMGH). Residues 581–585 (KMSKS) carry the 'KMSKS' region motif. K584 contacts ATP.

The protein belongs to the class-I aminoacyl-tRNA synthetase family.

It is found in the cytoplasm. The catalysed reaction is tRNA(Leu) + L-leucine + ATP = L-leucyl-tRNA(Leu) + AMP + diphosphate. The polypeptide is Leucine--tRNA ligase (Citrifermentans bemidjiense (strain ATCC BAA-1014 / DSM 16622 / JCM 12645 / Bem) (Geobacter bemidjiensis)).